Consider the following 441-residue polypeptide: Protein dcd1A (441 aa).

The first 23 residues, 1-23 (MKIFNKLIFLIIQCILIISVTNA), serve as a signal peptide directing secretion. N45, N261, N308, and N419 each carry an N-linked (GlcNAc...) asparagine glycan.

Its subcellular location is the secreted. The sequence is that of Protein dcd1A (dcd1A) from Dictyostelium discoideum (Social amoeba).